A 1517-amino-acid polypeptide reads, in one-letter code: MSKFKVIEIKEDARPRDFEAFQLRLASPEKIKSWSYGEVKKPETINYRTLKPERDGLFCAKIFGPIRDYECLCGKYKKMRFKGVKCEKCGVEVANSKVRRSRMGHIELVTPVAHIWYVNSLPSRIGTLLGVKMKDLERVLYYEAYIVENPGDAFYDNESTKKVEYCDVLNEEQYQNLMQRYENSGFKARMGGEVVRDLLANLDLVALLNQLKEEMGATNSEAKKKTIIKRLKVVENFLNSNLNANTDSDEAVPNRPEWMMITNLPVLPPDLRPLVALDGGKFAVSDVNDLYRRVINRNTRLKKLMELDAPEIIIRNEKRMLQEAVDALFDNGRRANAVKGANKRPLKSLSEIIKGKQGRFRQNLLGKRVDFSGRSVIVVGPKLRMDQCGLPKKMALELFKPHLLAKLEEKGYATTVKQAKKMIENKTNEVWECLEEVVKGHPVMLNRAPTLHKLSIQAFHPVLVEGKAIQLHPLVCAAFNADFDGDQMAVHVPLSQEAIAECKVLMLSSMNILLPASGKSVTVPSQDMVLGIYYLSLEKAGAKGSHKICTGIDEVMMALESKCLDIHASIQTMVDGRKITTTAGRLIIKSILPDFVPENSWNKVLKKKDIAALVDYVYKQGGLEITASFLDRLKNLGFEYATKAGISISIADIIVPNDKQKAIDEAKKQVREIQNSYNLGLITSGERYNKIIDIWKSTNNVLSKEMMKLVEKDKEGFNSIYMMADSGARGSAAQISQLAAMRGLMTKPDGSIIETPIISNFREGLNVLEYFISTHGARKGLADTALKTANAGYLTRKLIDVAQNVKITIEDCGTHEGVEINEITADSSIIETLEERILGRVLAEDVIDPITNSVLFAEGTLMDEEKAKILGESGIKSVNIRTPITCKAKKGICAKCYGINLGEGKLVKPGEAVGIISAQSIGEPGTQLTLRTFHSGGTASTDLQDRQVSAQKEGFIRFYNLKTYKNKEGKNIVANRRNAAVLLVEPKIKTPFKGVINIENIHEDVIVSIKDKKQEVKYILRKYDLAKPNELAGVSGSIDGKLYLPYQSGMQVEENESIVEVIKEGWNVPNRIPFASEILVEDGEPVVQNIKAGEKGTLKFYILKGDGLDRVKNVKKGDIVKEKGFFVVIADENDREAKRHYIPRESKIEFNDSEKIDDANTIIASAPKKERKVIAEWDAYNNTIIAEIDGVVSFEDIEAGYSADEQIDEATGKRSLVINEYLPSGVRPTLVIAGKGDKAVRYHLEPKTVIFVHDGDKIAQADILAKTPKAAAKSKDITGGLPRVSELFEARKPKNAAVIAEIDGVVRFDKPLRSKERIIIQAEDGTSAEYLIDKSKHIQVRDGEFIHAGEKLTDGVVSSHDVLKILGEKALHYYLISEIQQVYRGQGVVISDKHIEVIVSQMLRQVKVVDSGHTKFIEGDLVSRRKFREENERIIRMGGEPAIAEPVLLGVTRAAIGSDSVISAASFQETTKVLTEASIAGKFDYLEDLKENVILGRMIPVGTGLYGEQNLKLKEQE.

Residues Cys-71, Cys-73, Cys-86, and Cys-89 each coordinate Zn(2+). The Mg(2+) site is built by Asp-482, Asp-484, and Asp-486. Zn(2+) contacts are provided by Cys-812, Cys-886, Cys-893, and Cys-896.

Belongs to the RNA polymerase beta' chain family. The RNAP catalytic core consists of 2 alpha, 1 beta, 1 beta' and 1 omega subunit. When a sigma factor is associated with the core the holoenzyme is formed, which can initiate transcription. Requires Mg(2+) as cofactor. Zn(2+) is required as a cofactor.

It catalyses the reaction RNA(n) + a ribonucleoside 5'-triphosphate = RNA(n+1) + diphosphate. DNA-dependent RNA polymerase catalyzes the transcription of DNA into RNA using the four ribonucleoside triphosphates as substrates. The sequence is that of DNA-directed RNA polymerase subunit beta' from Campylobacter jejuni (strain RM1221).